The following is a 245-amino-acid chain: tRNA (guanine-N(1)-)-methyltransferase (245 aa).

S-adenosyl-L-methionine contacts are provided by residues G114 and 134 to 139 (IGDYIL).

Belongs to the RNA methyltransferase TrmD family. In terms of assembly, homodimer.

The protein localises to the cytoplasm. The catalysed reaction is guanosine(37) in tRNA + S-adenosyl-L-methionine = N(1)-methylguanosine(37) in tRNA + S-adenosyl-L-homocysteine + H(+). Functionally, specifically methylates guanosine-37 in various tRNAs. The chain is tRNA (guanine-N(1)-)-methyltransferase from Listeria welshimeri serovar 6b (strain ATCC 35897 / DSM 20650 / CCUG 15529 / CIP 8149 / NCTC 11857 / SLCC 5334 / V8).